The chain runs to 179 residues: Probable mitochondrial import inner membrane translocase subunit Tim17 1 (179 aa).

Transmembrane regions (helical) follow at residues 17–37 (CGGA…IKGF), 61–81 (LVGG…CSLV), and 113–133 (LSSA…GIVV).

This sequence belongs to the Tim17/Tim22/Tim23 family. In terms of assembly, component of the TIM23 complex at least composed of Tim23, Tim17 (Tim17a1, Tim17a2 or Tim17b1) and a Tim50. The complex interacts with the Tim44 component of the PAM complex.

The protein resides in the mitochondrion inner membrane. In terms of biological role, essential component of the TIM23 complex, a complex that mediates the translocation of transit peptide-containing proteins across the mitochondrial inner membrane. The chain is Probable mitochondrial import inner membrane translocase subunit Tim17 1 (Tim17b1) from Drosophila melanogaster (Fruit fly).